Reading from the N-terminus, the 328-residue chain is Aspartate carbamoyltransferase catalytic subunit (328 aa).

Residues R55 and T56 each coordinate carbamoyl phosphate. An L-aspartate-binding site is contributed by K83. Carbamoyl phosphate-binding residues include R105, H135, and Q138. Residues R176 and R230 each contribute to the L-aspartate site. Positions 271 and 272 each coordinate carbamoyl phosphate.

Belongs to the aspartate/ornithine carbamoyltransferase superfamily. ATCase family. As to quaternary structure, heterododecamer (2C3:3R2) of six catalytic PyrB chains organized as two trimers (C3), and six regulatory PyrI chains organized as three dimers (R2).

The catalysed reaction is carbamoyl phosphate + L-aspartate = N-carbamoyl-L-aspartate + phosphate + H(+). The protein operates within pyrimidine metabolism; UMP biosynthesis via de novo pathway; (S)-dihydroorotate from bicarbonate: step 2/3. Catalyzes the condensation of carbamoyl phosphate and aspartate to form carbamoyl aspartate and inorganic phosphate, the committed step in the de novo pyrimidine nucleotide biosynthesis pathway. This chain is Aspartate carbamoyltransferase catalytic subunit, found in Streptomyces griseus subsp. griseus (strain JCM 4626 / CBS 651.72 / NBRC 13350 / KCC S-0626 / ISP 5235).